Reading from the N-terminus, the 736-residue chain is Transcription regulator protein BACH1 (736 aa).

The BTB domain maps to Cys34–Lys100. Ser196 bears the Phosphoserine mark. Basic and acidic residues predominate over residues Met286–Pro295. Disordered stretches follow at residues Met286 to Asn312 and Lys349 to Val389. 2 positions are modified to phosphoserine: Ser364 and Ser445. Positions Cys557–Leu620 constitute a bZIP domain. Positions Arg562–Lys578 are basic motif. A leucine-zipper region spans residues Ile582–Ile589. The tract at residues Leu680–Gly719 is disordered. Positions Gln696–Gln708 are enriched in polar residues.

The protein belongs to the bZIP family. CNC subfamily. Heterodimer of BACH1 and MAFK. In terms of processing, ubiquitinated by the SCF(FBXL17) complex or by the by the SCF(FBXO22) complex, leading to its degradation by the proteasome. Under oxidative stress, reactive oxygen species covalently modify cysteine residues on the bZIP domain of BACH1 and release it from chromatin. If the BTB domain of BACH1 remains intact, its beta1-alpha6 degron is recognized by FBXO22, promoting its ubiquitination and degradation. If the structural integrity of the beta1-alpha6 degron is compromised, FBXL17 will transiently associate with the BACH1 BTB dimer and remodel it into stably bound monomer for ubiquitination and degradation.

The protein resides in the nucleus. Functionally, transcriptional regulator that acts as a repressor or activator, depending on the context. Binds to NF-E2 DNA binding sites. Plays important roles in coordinating transcription activation and repression by MAFK. Together with MAF, represses the transcription of genes under the control of the NFE2L2 oxidative stress pathway. In Homo sapiens (Human), this protein is Transcription regulator protein BACH1.